Consider the following 204-residue polypeptide: uncharacterized protein (204 aa).

Residues 160–180 (GLTVAAIASVVVAGAVTYLVV) form a helical membrane-spanning segment.

The protein to M.pneumoniae MPN_373 C-terminal region.

Its subcellular location is the cell membrane. This is an uncharacterized protein from Mycoplasma pneumoniae (strain ATCC 29342 / M129 / Subtype 1) (Mycoplasmoides pneumoniae).